Here is a 608-residue protein sequence, read N- to C-terminus: Pentatricopeptide repeat-containing protein At5g40410, mitochondrial (608 aa).

Residues Met1–His28 constitute a mitochondrion transit peptide. 11 PPR repeats span residues Leu30–Arg64, His65–Arg95, Asp96–Phe130, Asn133–Glu167, Glu168–Lys198, Asn199–Pro233, Asp234–Gly268, Asn269–Pro299, Asp300–Pro334, Asp335–Arg365, and Arg371–Glu401. The segment at Val406–Gly481 is type E motif. The type E(+) motif stretch occupies residues Asn482 to Lys512. The tract at residues Glu514–Trp608 is type DYW motif.

The protein belongs to the PPR family. PCMP-H subfamily.

The protein localises to the mitochondrion. In Arabidopsis thaliana (Mouse-ear cress), this protein is Pentatricopeptide repeat-containing protein At5g40410, mitochondrial (PCMP-H15).